The primary structure comprises 180 residues: Ribulose bisphosphate carboxylase small subunit, chloroplastic 3 (180 aa).

Residues 1–56 (MASMISSSAVTTVSRASTVQSAAVAPFGGLKSMTGFPVKKVNTDITSITSNGGRVK) constitute a chloroplast transit peptide.

It belongs to the RuBisCO small chain family. In terms of assembly, heterohexadecamer of 8 large and 8 small subunits.

It localises to the plastid. Its subcellular location is the chloroplast. RuBisCO catalyzes two reactions: the carboxylation of D-ribulose 1,5-bisphosphate, the primary event in carbon dioxide fixation, as well as the oxidative fragmentation of the pentose substrate. Both reactions occur simultaneously and in competition at the same active site. Although the small subunit is not catalytic it is essential for maximal activity. Binds to abscisic acid (ABA); only half of the possible binding sites are occupied in the crystal; and there are indications this is a low affinity site. This chain is Ribulose bisphosphate carboxylase small subunit, chloroplastic 3 (RBCS.3A), found in Pisum sativum (Garden pea).